Consider the following 475-residue polypeptide: Methylenomycin A resistance protein (475 aa).

A run of 14 helical transmembrane segments spans residues 28–48 (ITAL…VNVA), 65–85 (WIVD…GGLA), 93–113 (VYLW…LAPT), 123–143 (VQGA…VFSF), 152–172 (MLGL…TVGG), 173–193 (LMVS…IGAI), 212–232 (LAVP…FALI), 240–260 (TAGP…LLAL), 285–305 (LVGF…GLYF), 314–334 (FQAG…NIVY), 346–366 (LLTA…TITA), 371–391 (WVVA…SPGM), 416–436 (QIGS…TSDW), and 439–459 (GAAI…LSAW).

Belongs to the major facilitator superfamily.

Its subcellular location is the cell membrane. Its function is as follows. Resistance to the epoxide antibiotic methylenomycin A; probably by mediating its efflux. In Streptomyces coelicolor (strain ATCC BAA-471 / A3(2) / M145), this protein is Methylenomycin A resistance protein (mmr).